The chain runs to 551 residues: Rhodopsin kinase grk7-a (551 aa).

A Phosphoserine modification is found at Ser36. An RGS domain is found at 57–174; that stretch reads YQSICVEQPI…QNSPFYDRFL (118 aa). Positions 189-451 constitute a Protein kinase domain; it reads FYEFRILGKG…DDDPRKHAFF (263 aa). ATP-binding positions include 195–203 and Lys218; that span reads LGKGGFGEV. Residue Asp314 is the Proton acceptor of the active site. Residues 452–517 enclose the AGC-kinase C-terminal domain; it reads KSINFQRLEA…GAIPISWQKE (66 aa). Ser487 bears the Phosphoserine mark. Positions 529 to 551 are disordered; sequence DPSREATGGGGNSGEKSGVCSIL. Over residues 542-551 the composition is skewed to low complexity; it reads GEKSGVCSIL. The residue at position 548 (Cys548) is a Cysteine methyl ester. A lipid anchor (S-geranylgeranyl cysteine) is attached at Cys548. The propeptide at 549–551 is removed in mature form; that stretch reads SIL.

It belongs to the protein kinase superfamily. AGC Ser/Thr protein kinase family. GPRK subfamily. Autophosphorylated in vitro at Ser-487. Phosphorylation at Ser-36 is regulated by light and activated by cAMP.

Its subcellular location is the membrane. The catalysed reaction is L-threonyl-[rhodopsin] + ATP = O-phospho-L-threonyl-[rhodopsin] + ADP + H(+). It catalyses the reaction L-seryl-[rhodopsin] + ATP = O-phospho-L-seryl-[rhodopsin] + ADP + H(+). Retina-specific kinase involved in the shutoff of the photoresponse and adaptation to changing light conditions via cone opsin phosphorylation, including rhodopsin (RHO). This chain is Rhodopsin kinase grk7-a (grk7-a), found in Xenopus laevis (African clawed frog).